The following is a 323-amino-acid chain: Voltage-dependent calcium channel gamma-2 subunit (323 aa).

The chain crosses the membrane as a helical span at residues 10–30 (MLLTTVGAFAAFSLMTIAVGT). An N-linked (GlcNAc...) asparagine glycan is attached at asparagine 48. The next 3 membrane-spanning stretches (helical) occupy residues 104-124 (SSIF…CIAA), 134-154 (IILS…IGII), and 182-202 (FGAL…HMFI). Positions 233–261 (YQRRSRSSSRSTEPSHSRDASPVGVKGFN) are disordered. Serine 253 is subject to Phosphoserine. Tyrosine 271 is subject to Phosphotyrosine. Threonine 321 is modified (phosphothreonine; by PKA).

The protein belongs to the PMP-22/EMP/MP20 family. CACNG subfamily. As to quaternary structure, the L-type calcium channel is composed of five subunits: alpha-1, alpha-2/delta, beta and gamma. Interacts with the PDZ domains of DLG4/PSD-95 and DLG1/SAP97. May interact with GOPC. Acts as an auxiliary subunit for AMPA-selective glutamate receptors (AMPARs). Found in a complex with GRIA1, GRIA2, GRIA3, GRIA4, CNIH2, CNIH3, CACNG3, CACNG4, CACNG5, CACNG7 and CACNG8. Interacts with GRIA1 and GRIA2. Interacts with MPP2. In terms of processing, phosphorylation of Thr-321 by PKA impairs interaction with DLG1 and DLG4. Brain.

The protein resides in the membrane. Its subcellular location is the synapse. It is found in the synaptosome. Functionally, regulates the trafficking and gating properties of AMPA-selective glutamate receptors (AMPARs). Promotes their targeting to the cell membrane and synapses and modulates their gating properties by slowing their rates of activation, deactivation and desensitization. Does not show subunit-specific AMPA receptor regulation and regulates all AMPAR subunits. Thought to stabilize the calcium channel in an inactivated (closed) state. This Mus musculus (Mouse) protein is Voltage-dependent calcium channel gamma-2 subunit (Cacng2).